A 302-amino-acid polypeptide reads, in one-letter code: Trans-4-hydroxy-L-proline dehydratase activating enzyme (302 aa).

The 284-residue stretch at 14-297 (HDGPGIRSTV…KRLFEASNFN (284 aa)) folds into the Radical SAM core domain. Residues Cys28, Cys32, Cys35, Cys54, Cys57, Cys60, and Cys93 each coordinate [4Fe-4S] cluster. Residue 34-36 (WCH) participates in S-adenosyl-L-methionine binding. 4Fe-4S ferredoxin-type domains lie at 45–74 (KQVL…KGET) and 75–103 (KICL…IVGQ). Residues Gly133, 183 to 185 (DIK), and His257 each bind S-adenosyl-L-methionine.

It belongs to the organic radical-activating enzymes family. [4Fe-4S] cluster serves as cofactor.

The enzyme catalyses glycyl-[protein] + reduced [flavodoxin] + S-adenosyl-L-methionine = glycin-2-yl radical-[protein] + semiquinone [flavodoxin] + 5'-deoxyadenosine + L-methionine + H(+). Catalyzes activation of the trans-4-hydroxy-L-proline dehydratase under anaerobic conditions by generation of an organic free radical on a glycine residue, via a homolytic cleavage of S-adenosyl-L-methionine (SAM). Is involved in the anaerobic degradation of 4-hydroxyproline. The chain is Trans-4-hydroxy-L-proline dehydratase activating enzyme from Clostridioides difficile (Peptoclostridium difficile).